The primary structure comprises 561 residues: uncharacterized protein (561 aa).

2 disordered regions span residues 369-390 (SVPE…LSKG) and 429-515 (EGLG…GESE). Ser-383 is subject to Phosphoserine. A compositionally biased stretch (polar residues) spans 465 to 503 (NISPESSRFGTPSDPNSSSQSLGNEVLSRPNSNSNSAES).

This is an uncharacterized protein from Schizosaccharomyces pombe (strain 972 / ATCC 24843) (Fission yeast).